A 101-amino-acid chain; its full sequence is MAKKSSVEKNKHRAQLVKQYAGRRARLKAIANDETLSMEERFEARLKLAELPRNSAPVRLRNRCEISGRPRAFTRKMKMSRIAVRELGSQGLIPGLVKSSW.

The protein belongs to the universal ribosomal protein uS14 family. Part of the 30S ribosomal subunit. Contacts proteins S3 and S10.

Functionally, binds 16S rRNA, required for the assembly of 30S particles and may also be responsible for determining the conformation of the 16S rRNA at the A site. The chain is Small ribosomal subunit protein uS14 from Beijerinckia indica subsp. indica (strain ATCC 9039 / DSM 1715 / NCIMB 8712).